Here is a 144-residue protein sequence, read N- to C-terminus: Small polypeptide DEVIL 15 (144 aa).

N-linked (GlcNAc...) asparagine glycosylation occurs at Asn8. A disordered region spans residues 22–63; that stretch reads SSSSKPFFTRSFSTKTSSSPSSKSHFTRSFSTKPSSSSSSSD. Residues 104-120 traverse the membrane as a helical segment; the sequence is ILSKKGASVTGKCFKVA. Residues 111-142 form a required for DVL/RTFL small polypeptide activity region; it reads SVTGKCFKVAKEHKSRFYIIKRCVLMLVCWHK.

The protein belongs to the DVL/RTFL small polypeptides family.

The protein localises to the cell membrane. Its function is as follows. Small polypeptide acting as a regulatory molecule which coordinates cellular responses required for differentiation, growth and development, probably by restricting polar cell proliferation in lateral organs and coordinating socket cell recruitment and differentiation at trichome sites. The protein is Small polypeptide DEVIL 15 of Arabidopsis thaliana (Mouse-ear cress).